A 2324-amino-acid polypeptide reads, in one-letter code: Serine/threonine-protein kinase MEC1 (2324 aa).

In terms of domain architecture, FAT spans 1349–1901; it reads VLAQKSLETN…LWYITVLLNS (553 aa). The 304-residue stretch at 2005-2308 folds into the PI3K/PI4K catalytic domain; that stretch reads FTPHYKVYSS…QVDTVVQQAS (304 aa). The segment at 2011–2017 is G-loop; that stretch reads VYSSLKK. A catalytic loop region spans residues 2177-2185; sequence GLGDRHLEN. Residues 2197–2221 are activation loop; the sequence is HVDFDCLFEKGKTLPVPEIVPFRLT. In terms of domain architecture, FATC spans 2292–2324; sequence LPLSVPGQVDTVVQQASSDENLAQMYIGWLPFW.

Belongs to the PI3/PI4-kinase family. ATM subfamily.

It localises to the nucleus. The enzyme catalyses L-seryl-[protein] + ATP = O-phospho-L-seryl-[protein] + ADP + H(+). It carries out the reaction L-threonyl-[protein] + ATP = O-phospho-L-threonyl-[protein] + ADP + H(+). Functionally, serine/threonine protein kinase which activates checkpoint signaling upon genotoxic stresses such as ionizing radiation (IR), ultraviolet light (UV), or DNA replication stalling, thereby acting as a DNA damage sensor. Recognizes the substrate consensus sequence [ST]-Q. Recruited to DNA lesions in order to initiate the DNA repair by homologous recombination. Phosphorylates histone H2A to form H2AS128ph (gamma-H2A) at sites of DNA damage, also involved in the regulation of DNA damage response mechanism. Required for cell growth and meiotic recombination. The sequence is that of Serine/threonine-protein kinase MEC1 (MEC1) from Eremothecium gossypii (strain ATCC 10895 / CBS 109.51 / FGSC 9923 / NRRL Y-1056) (Yeast).